The primary structure comprises 404 residues: DNA gyrase subunit B (404 aa).

The Toprim domain occupies 321 to 404 (SEIYIVEGDS…VIIMTDADVD (84 aa)). Glu-327, Asp-400, and Asp-402 together coordinate Mg(2+).

It belongs to the type II topoisomerase GyrB family. In terms of assembly, heterotetramer, composed of two GyrA and two GyrB chains. In the heterotetramer, GyrA contains the active site tyrosine that forms a transient covalent intermediate with DNA, while GyrB binds cofactors and catalyzes ATP hydrolysis. Requires Mg(2+) as cofactor. The cofactor is Mn(2+). It depends on Ca(2+) as a cofactor.

The protein localises to the cytoplasm. The enzyme catalyses ATP-dependent breakage, passage and rejoining of double-stranded DNA.. Functionally, a type II topoisomerase that negatively supercoils closed circular double-stranded (ds) DNA in an ATP-dependent manner to modulate DNA topology and maintain chromosomes in an underwound state. Negative supercoiling favors strand separation, and DNA replication, transcription, recombination and repair, all of which involve strand separation. Also able to catalyze the interconversion of other topological isomers of dsDNA rings, including catenanes and knotted rings. Type II topoisomerases break and join 2 DNA strands simultaneously in an ATP-dependent manner. This chain is DNA gyrase subunit B (gyrB), found in Bacillus cereus.